The sequence spans 313 residues: Carbamate kinase 2 (313 aa).

It belongs to the carbamate kinase family.

Its subcellular location is the cytoplasm. It catalyses the reaction hydrogencarbonate + NH4(+) + ATP = carbamoyl phosphate + ADP + H2O + H(+). The protein operates within metabolic intermediate metabolism; carbamoyl phosphate degradation; CO(2) and NH(3) from carbamoyl phosphate: step 1/1. This Staphylococcus aureus (strain bovine RF122 / ET3-1) protein is Carbamate kinase 2 (arcC2).